Reading from the N-terminus, the 452-residue chain is LIM/homeobox protein lim-7 (452 aa).

2 LIM zinc-binding domains span residues alanine 54–threonine 116 and arginine 117–proline 179. Positions serine 184–valine 268 are disordered. 2 stretches are compositionally biased toward low complexity: residues asparagine 192–asparagine 205 and threonine 217–serine 227. Residues alanine 265–glutamine 324 constitute a DNA-binding region (homeobox). The LIM interaction domain (LID) stretch occupies residues glycine 347–tryptophan 376.

As to quaternary structure, interacts (via LID domain) with ceh-14 (via LIM zinc-binding domains 1 and 2). In terms of tissue distribution, expressed in gonadal sheath cells, URA motoneurons, and 10 additional cells near the isthmus and terminal bulb of the pharynx. Expressed in the ALA and BDU cells.

Its subcellular location is the nucleus. Its function is as follows. Probable DNA-binding transcriptional activator. The protein is LIM/homeobox protein lim-7 of Caenorhabditis elegans.